The primary structure comprises 230 residues: Octanoyltransferase (230 aa).

The BPL/LPL catalytic domain maps to 31-230; that stretch reads PETPDELWIC…GDKLTRYLAP (200 aa). Residues 70 to 77, 163 to 165, and 176 to 178 contribute to the substrate site; these read RGGQVTYH, ALG, and GVA. Cys-194 (acyl-thioester intermediate) is an active-site residue.

This sequence belongs to the LipB family.

Its subcellular location is the cytoplasm. The enzyme catalyses octanoyl-[ACP] + L-lysyl-[protein] = N(6)-octanoyl-L-lysyl-[protein] + holo-[ACP] + H(+). It functions in the pathway protein modification; protein lipoylation via endogenous pathway; protein N(6)-(lipoyl)lysine from octanoyl-[acyl-carrier-protein]: step 1/2. In terms of biological role, catalyzes the transfer of endogenously produced octanoic acid from octanoyl-acyl-carrier-protein onto the lipoyl domains of lipoate-dependent enzymes. Lipoyl-ACP can also act as a substrate although octanoyl-ACP is likely to be the physiological substrate. This is Octanoyltransferase from Albidiferax ferrireducens (strain ATCC BAA-621 / DSM 15236 / T118) (Rhodoferax ferrireducens).